Here is a 324-residue protein sequence, read N- to C-terminus: R2-like ligand binding oxidase (324 aa).

Mn(2+) contacts are provided by E79, E112, and H115. The segment at residues V82–Y173 is a cross-link (3-(O4'-tyrosyl)-valine (Val-Tyr)). Position 112 (E112) interacts with Fe cation. The Fe cation site is built by E178, E213, and H216. Residues P304–G324 form a disordered region. Residues L307–A318 are compositionally biased toward basic and acidic residues.

Belongs to the ribonucleoside diphosphate reductase small chain family. R2-like ligand binding oxidase subfamily. In terms of assembly, homodimer. The cofactor is Fe cation. Requires Mn(2+) as cofactor.

In terms of biological role, probable oxidase. The chain is R2-like ligand binding oxidase from Rhodococcus jostii (strain RHA1).